The primary structure comprises 185 residues: piRNA-mediated silencing protein C19orf84 homolog (185 aa).

Disordered regions lie at residues 1–38 and 93–185; these read MDELEDGALSNGDNLSLPSAGTESWPTSATPGLPPSLL and HIWP…EADY. The span at 11–25 shows a compositional bias: polar residues; sequence NGDNLSLPSAGTESW. Low complexity predominate over residues 26 to 38; sequence PTSATPGLPPSLL. Residues 118–130 are compositionally biased toward basic residues; it reads RPSRGWGRGRGRG. Positions 139–150 are enriched in basic and acidic residues; sequence GPERAEERERNM.

Interacts with SPOCD1.

The protein localises to the nucleus. The protein resides in the nucleoplasm. In terms of biological role, protein adapter involved in piRNA-directed transposon methylation by connecting PIWIL4-piRNA and DNA methylation machineries. The PIWIL4-piRNA pathway plays a central role during spermatogenesis by directing transposon DNA methylation and silencing, thereby preventing their mobilization, which is essential for the germline integrity. The sequence is that of piRNA-mediated silencing protein C19orf84 homolog from Mus musculus (Mouse).